Reading from the N-terminus, the 257-residue chain is Ribosomal RNA small subunit methyltransferase A (257 aa).

Positions 12, 14, 39, 60, 85, and 105 each coordinate S-adenosyl-L-methionine.

It belongs to the class I-like SAM-binding methyltransferase superfamily. rRNA adenine N(6)-methyltransferase family. RsmA subfamily.

It localises to the cytoplasm. It carries out the reaction adenosine(1518)/adenosine(1519) in 16S rRNA + 4 S-adenosyl-L-methionine = N(6)-dimethyladenosine(1518)/N(6)-dimethyladenosine(1519) in 16S rRNA + 4 S-adenosyl-L-homocysteine + 4 H(+). Specifically dimethylates two adjacent adenosines (A1518 and A1519) in the loop of a conserved hairpin near the 3'-end of 16S rRNA in the 30S particle. May play a critical role in biogenesis of 30S subunits. The sequence is that of Ribosomal RNA small subunit methyltransferase A from Methylococcus capsulatus (strain ATCC 33009 / NCIMB 11132 / Bath).